Reading from the N-terminus, the 817-residue chain is Fibroblast growth factor receptor 2 (817 aa).

An N-terminal signal peptide occupies residues methionine 1–alanine 22. Residues arginine 23 to glutamate 377 lie on the Extracellular side of the membrane. Ig-like C2-type domains are found at residues leucine 26 to threonine 126, proline 159 to aspartate 247, and proline 256 to threonine 358. 3 N-linked (GlcNAc...) asparagine glycosylation sites follow: asparagine 32, asparagine 84, and asparagine 124. Cysteine 63 and cysteine 108 are oxidised to a cystine. A heparin-binding region spans residues lysine 161 to arginine 178. Cysteines 179 and 231 form a disulfide. Residues asparagine 228, asparagine 265, asparagine 297, asparagine 318, and asparagine 331 are each glycosylated (N-linked (GlcNAc...) asparagine). Cysteine 278 and cysteine 342 are disulfide-bonded. The helical transmembrane segment at isoleucine 378 to cysteine 398 threads the bilayer. Residues arginine 399 to threonine 817 lie on the Cytoplasmic side of the membrane. A disordered region spans residues threonine 429 to proline 465. Residues serine 431 to serine 441 show a composition bias toward low complexity. Tyrosine 462 carries the post-translational modification Phosphotyrosine; by autocatalysis. A Protein kinase domain is found at leucine 477–leucine 766. Residues leucine 483–valine 491, lysine 513, glutamate 561–alanine 563, and asparagine 567 contribute to the ATP site. At tyrosine 582 the chain carries Phosphotyrosine; by autocatalysis. The Proton acceptor role is filled by aspartate 622. Tyrosine 652, tyrosine 653, and tyrosine 765 each carry phosphotyrosine; by autocatalysis.

This sequence belongs to the protein kinase superfamily. Tyr protein kinase family. Fibroblast growth factor receptor subfamily. As to quaternary structure, monomer. Homodimer after ligand binding. Post-translationally, autophosphorylated. Binding of FGF family members together with heparan sulfate proteoglycan or heparin promotes receptor dimerization and autophosphorylation on tyrosine residues. Autophosphorylation occurs in trans between the two FGFR molecules present in the dimer. In terms of processing, N-glycosylated in the endoplasmic reticulum. The N-glycan chains undergo further maturation to an Endo H-resistant form in the Golgi apparatus. Ubiquitinated. FGFR2 is rapidly ubiquitinated after autophosphorylation, leading to internalization and degradation. Subject to degradation both in lysosomes and by the proteasome.

Its subcellular location is the cell membrane. The protein resides in the golgi apparatus. It localises to the cytoplasmic vesicle. The enzyme catalyses L-tyrosyl-[protein] + ATP = O-phospho-L-tyrosyl-[protein] + ADP + H(+). Its activity is regulated as follows. Present in an inactive conformation in the absence of bound ligand. Ligand binding leads to dimerization and activation by autophosphorylation on tyrosine residues. Functionally, tyrosine-protein kinase that acts as a cell-surface receptor for fibroblast growth factors and plays an essential role in the regulation of cell proliferation, differentiation, migration and apoptosis, and in the regulation of embryonic development. Required for normal embryonic patterning, limb bud development, lung morphogenesis, osteogenesis and skin development. Plays an essential role in the regulation of osteoblast differentiation, proliferation and apoptosis, and is required for normal skeleton development. Promotes cell proliferation in keratinocytes and immature osteoblasts, but promotes apoptosis in differentiated osteoblasts. Phosphorylates PLCG1, FRS2 and PAK4. Ligand binding leads to the activation of several signaling cascades. Activation of PLCG1 leads to the production of the cellular signaling molecules diacylglycerol and inositol 1,4,5-trisphosphate. Phosphorylation of FRS2 triggers recruitment of GRB2, GAB1, PIK3R1 and SOS1, and mediates activation of RAS, MAPK1/ERK2, MAPK3/ERK1 and the MAP kinase signaling pathway, as well as of the AKT1 signaling pathway. FGFR2 signaling is down-regulated by ubiquitination, internalization and degradation. Mutations that lead to constitutive kinase activation or impair normal FGFR2 maturation, internalization and degradation lead to aberrant signaling. Over-expressed FGFR2 promotes activation of STAT1. The chain is Fibroblast growth factor receptor 2 (fgfr2) from Danio rerio (Zebrafish).